The sequence spans 315 residues: Olfactory receptor 5A1 (315 aa).

Over M1–A28 the chain is Extracellular. N8 carries an N-linked (GlcNAc...) asparagine glycan. Residues L29–I52 traverse the membrane as a helical segment. The Cytoplasmic segment spans residues R53–T60. The chain crosses the membrane as a helical span at residues P61 to P82. At N83–Q103 the chain is on the extracellular side. Residues C100 and C192 are joined by a disulfide bond. Residues F104–Y123 form a helical membrane-spanning segment. Topologically, residues D124–G142 are cytoplasmic. Residues L143–I161 traverse the membrane as a helical segment. At Q162 to S198 the chain is on the extracellular side. Residues Q199–G222 traverse the membrane as a helical segment. The Cytoplasmic portion of the chain corresponds to Y223 to K239. A helical membrane pass occupies residues A240–Y262. At L263 to K275 the chain is on the extracellular side. A helical membrane pass occupies residues V276–L295. Residues R296 to S315 are Cytoplasmic-facing.

The protein belongs to the G-protein coupled receptor 1 family.

Its subcellular location is the cell membrane. Its function is as follows. Odorant receptor. The sequence is that of Olfactory receptor 5A1 (OR5A1) from Homo sapiens (Human).